The chain runs to 383 residues: MKNICLLGATGSIGEQTLDVLRAHQDQFQLVSMSFGRNIDKAVPMIEVFQPKFVSVGDLDTYHKLKQMSFSFECQIGLGEEGLIEAAVMEEVDIVVNALLGSVGLIPTLKAIEQKKTIALANKETLVTAGHIVKEHAKKYDVPLLPVDSEHSAIFQALQGEQAKNIERLIITASGGSFRDKTREELESVTVEDALKHPNWSMGAKITIDSATMMNKGLEVIEAHWLFDIPYEQIDVVLHKESIIHSMVEFHDKSVIAQLGTPDMRVPIQYALTYPDRLPLPDAKRLELWEIGSLHFEKADFDRFRCLQFAFESGKIGGTMPTVLNAANEVAVAAFLAGKIPFLAIEDCIEKALTRHQLLKKPSLADIQEVDKDTRGYVNSILT.

Residues T10, G11, S12, I13, G36, R37, N38, and N122 each coordinate NADPH. K123 serves as a coordination point for 1-deoxy-D-xylulose 5-phosphate. An NADPH-binding site is contributed by E124. Residue D148 coordinates Mn(2+). The 1-deoxy-D-xylulose 5-phosphate site is built by S149, E150, S174, and H197. E150 is a binding site for Mn(2+). G203 is a binding site for NADPH. Positions 210, 215, 216, and 219 each coordinate 1-deoxy-D-xylulose 5-phosphate. E219 contributes to the Mn(2+) binding site.

It belongs to the DXR family. Mg(2+) serves as cofactor. It depends on Mn(2+) as a cofactor.

The catalysed reaction is 2-C-methyl-D-erythritol 4-phosphate + NADP(+) = 1-deoxy-D-xylulose 5-phosphate + NADPH + H(+). Its pathway is isoprenoid biosynthesis; isopentenyl diphosphate biosynthesis via DXP pathway; isopentenyl diphosphate from 1-deoxy-D-xylulose 5-phosphate: step 1/6. Functionally, catalyzes the NADPH-dependent rearrangement and reduction of 1-deoxy-D-xylulose-5-phosphate (DXP) to 2-C-methyl-D-erythritol 4-phosphate (MEP). The chain is 1-deoxy-D-xylulose 5-phosphate reductoisomerase from Bacillus subtilis (strain 168).